Consider the following 429-residue polypeptide: Ribosomal RNA small subunit methyltransferase B (429 aa).

Residues 254 to 260 (CAAPGGK), Asp-277, Asp-303, and Asp-322 contribute to the S-adenosyl-L-methionine site. Cys-375 (nucleophile) is an active-site residue.

It belongs to the class I-like SAM-binding methyltransferase superfamily. RsmB/NOP family.

The protein resides in the cytoplasm. The catalysed reaction is cytidine(967) in 16S rRNA + S-adenosyl-L-methionine = 5-methylcytidine(967) in 16S rRNA + S-adenosyl-L-homocysteine + H(+). Its function is as follows. Specifically methylates the cytosine at position 967 (m5C967) of 16S rRNA. In Photorhabdus laumondii subsp. laumondii (strain DSM 15139 / CIP 105565 / TT01) (Photorhabdus luminescens subsp. laumondii), this protein is Ribosomal RNA small subunit methyltransferase B.